The sequence spans 318 residues: N-acetyl-gamma-glutamyl-phosphate reductase (318 aa).

C132 is a catalytic residue.

Belongs to the NAGSA dehydrogenase family. Type 1 subfamily.

It localises to the cytoplasm. The enzyme catalyses N-acetyl-L-glutamate 5-semialdehyde + phosphate + NADP(+) = N-acetyl-L-glutamyl 5-phosphate + NADPH + H(+). Its pathway is amino-acid biosynthesis; L-arginine biosynthesis; N(2)-acetyl-L-ornithine from L-glutamate: step 3/4. Functionally, catalyzes the NADPH-dependent reduction of N-acetyl-5-glutamyl phosphate to yield N-acetyl-L-glutamate 5-semialdehyde. This chain is N-acetyl-gamma-glutamyl-phosphate reductase, found in Azobacteroides pseudotrichonymphae genomovar. CFP2.